The chain runs to 460 residues: Cysteine--tRNA ligase (460 aa).

Cys-29 provides a ligand contact to Zn(2+). The 'HIGH' region signature appears at 31 to 41 (ATPQSSPHIGH). Zn(2+) is bound by residues Cys-212, His-237, and Glu-241. The 'KMSKS' region motif lies at 268–272 (KMSKS). Position 271 (Lys-271) interacts with ATP.

Belongs to the class-I aminoacyl-tRNA synthetase family. Monomer. Requires Zn(2+) as cofactor.

The protein resides in the cytoplasm. The catalysed reaction is tRNA(Cys) + L-cysteine + ATP = L-cysteinyl-tRNA(Cys) + AMP + diphosphate. The chain is Cysteine--tRNA ligase from Corynebacterium glutamicum (strain R).